The following is a 183-amino-acid chain: Large ribosomal subunit protein bL32m (183 aa).

Positions 99, 102, 112, and 115 each coordinate Zn(2+).

Belongs to the bacterial ribosomal protein bL32 family. As to quaternary structure, component of the mitochondrial large ribosomal subunit (mt-LSU).

The protein resides in the mitochondrion. In terms of biological role, component of the mitochondrial large ribosomal subunit (mt-LSU). The mitochondrial ribosome (mitoribosome) is a large ribonucleoprotein complex responsible for the synthesis of proteins inside mitochondria. The sequence is that of Large ribosomal subunit protein bL32m (mrpl-32) from Caenorhabditis elegans.